The chain runs to 469 residues: MNPNQKIITIGSVSLTIATVCFLMQIAILATTVTLHFKQHECDSPASNQVMPCEPIIIERNITEIVYLNNTTIEKEICPEVVEYRNWSKPQCQITGFAPFSKDNSIRLSAGGDIWVTREPYVSCDPGKCYQFALGQGTTLDNKHSNGTIHDRIPHRTLLMNELGVPFHLGTKQVCVAWSSSSCHDGKAWLHVCVTGDDRNATASFIYDGRLVDSIGSWSQNILRTQESECVCINGTCTVVMTDGSASGRADTRILFIKEGKIVHISPLSGSAQHIEECSCYPRYPDVRCICRDNWKGSNRPVIDINMEDYSIDSSYVCSGLVGDTPRNDDSSSNSNCRDPNNERGNPGVKGWAFDNGDDVWMGRTINKDSRSGYETFKVIGGWSTPNSKSQVNRQVIVDNNNWSGYSGIFSVEGKSCINRCFYVELIRGRPQETRVWWTSNSIVVFCGTSGTYGTGSWPDGANINFMPI.

At methionine 1–lysine 6 the chain is on the intravirion side. A helical transmembrane segment spans residues isoleucine 7–leucine 29. The involved in apical transport and lipid raft association stretch occupies residues glycine 11 to valine 33. Residues alanine 30–isoleucine 469 lie on the Virion surface side of the membrane. The hypervariable stalk region stretch occupies residues histidine 36–serine 88. Asparagine 61, asparagine 69, asparagine 70, and asparagine 86 each carry an N-linked (GlcNAc...) asparagine; by host glycan. A head of neuraminidase region spans residues glutamine 91–isoleucine 469. 8 cysteine pairs are disulfide-bonded: cysteine 92/cysteine 417, cysteine 124/cysteine 129, cysteine 183/cysteine 230, cysteine 232/cysteine 237, cysteine 278/cysteine 291, cysteine 280/cysteine 289, cysteine 318/cysteine 337, and cysteine 421/cysteine 447. Position 118 (arginine 118) interacts with substrate. Asparagine 146 carries N-linked (GlcNAc...) asparagine; by host glycosylation. The active-site Proton donor/acceptor is aspartate 151. Arginine 152 contributes to the substrate binding site. N-linked (GlcNAc...) asparagine; by host glycans are attached at residues asparagine 200 and asparagine 234. Glutamate 276–glutamate 277 contributes to the substrate binding site. Arginine 292 is a substrate binding site. Positions 293, 297, and 324 each coordinate Ca(2+). The disordered stretch occupies residues threonine 325–valine 349. Arginine 371 lines the substrate pocket. Asparagine 402 is a glycosylation site (N-linked (GlcNAc...) asparagine; by host). Tyrosine 406 acts as the Nucleophile in catalysis.

It belongs to the glycosyl hydrolase 34 family. Homotetramer. It depends on Ca(2+) as a cofactor. In terms of processing, N-glycosylated.

The protein resides in the virion membrane. It is found in the host apical cell membrane. The enzyme catalyses Hydrolysis of alpha-(2-&gt;3)-, alpha-(2-&gt;6)-, alpha-(2-&gt;8)- glycosidic linkages of terminal sialic acid residues in oligosaccharides, glycoproteins, glycolipids, colominic acid and synthetic substrates.. Inhibited by the neuraminidase inhibitors zanamivir (Relenza) and oseltamivir (Tamiflu). These drugs interfere with the release of progeny virus from infected cells and are effective against all influenza strains. Resistance to neuraminidase inhibitors is quite rare. In terms of biological role, catalyzes the removal of terminal sialic acid residues from viral and cellular glycoconjugates. Cleaves off the terminal sialic acids on the glycosylated HA during virus budding to facilitate virus release. Additionally helps virus spread through the circulation by further removing sialic acids from the cell surface. These cleavages prevent self-aggregation and ensure the efficient spread of the progeny virus from cell to cell. Otherwise, infection would be limited to one round of replication. Described as a receptor-destroying enzyme because it cleaves a terminal sialic acid from the cellular receptors. May facilitate viral invasion of the upper airways by cleaving the sialic acid moieties on the mucin of the airway epithelial cells. Likely to plays a role in the budding process through its association with lipid rafts during intracellular transport. May additionally display a raft-association independent effect on budding. Plays a role in the determination of host range restriction on replication and virulence. Sialidase activity in late endosome/lysosome traffic seems to enhance virus replication. In Aves (Human), this protein is Neuraminidase.